Consider the following 296-residue polypeptide: Phosphoribosylaminoimidazole-succinocarboxamide synthase (296 aa).

The protein belongs to the SAICAR synthetase family.

The catalysed reaction is 5-amino-1-(5-phospho-D-ribosyl)imidazole-4-carboxylate + L-aspartate + ATP = (2S)-2-[5-amino-1-(5-phospho-beta-D-ribosyl)imidazole-4-carboxamido]succinate + ADP + phosphate + 2 H(+). It participates in purine metabolism; IMP biosynthesis via de novo pathway; 5-amino-1-(5-phospho-D-ribosyl)imidazole-4-carboxamide from 5-amino-1-(5-phospho-D-ribosyl)imidazole-4-carboxylate: step 1/2. The chain is Phosphoribosylaminoimidazole-succinocarboxamide synthase from Desulfotalea psychrophila (strain LSv54 / DSM 12343).